A 183-amino-acid chain; its full sequence is Ribosome maturation factor RimM (183 aa).

In terms of domain architecture, PRC barrel spans 105–181; that stretch reads ANEYHLMDLI…RIEIDPPLGL (77 aa).

It belongs to the RimM family. In terms of assembly, binds ribosomal protein uS19.

It localises to the cytoplasm. Functionally, an accessory protein needed during the final step in the assembly of 30S ribosomal subunit, possibly for assembly of the head region. Essential for efficient processing of 16S rRNA. May be needed both before and after RbfA during the maturation of 16S rRNA. It has affinity for free ribosomal 30S subunits but not for 70S ribosomes. The protein is Ribosome maturation factor RimM of Thermosynechococcus vestitus (strain NIES-2133 / IAM M-273 / BP-1).